Reading from the N-terminus, the 378-residue chain is Mannitol-1-phosphate 5-dehydrogenase (378 aa).

4 to 15 serves as a coordination point for NAD(+); it reads SVHFGAGNIGRG.

This sequence belongs to the mannitol dehydrogenase family.

The catalysed reaction is D-mannitol 1-phosphate + NAD(+) = beta-D-fructose 6-phosphate + NADH + H(+). This Streptococcus pneumoniae (strain ATCC BAA-255 / R6) protein is Mannitol-1-phosphate 5-dehydrogenase.